Reading from the N-terminus, the 901-residue chain is Protein translocase subunit SecA (901 aa).

Residues glutamine 87, 105 to 109, and aspartate 512 contribute to the ATP site; that span reads GEGKT. The interval 853-901 is disordered; that stretch reads QMQQLSHQTDENEAAEAIAAQTGDRKVGRNDPCPCGSGKKYKSCHGRLS. Cysteine 885, cysteine 887, cysteine 896, and histidine 897 together coordinate Zn(2+). The segment covering 891 to 901 has biased composition (basic residues); it reads KKYKSCHGRLS.

The protein belongs to the SecA family. Monomer and homodimer. Part of the essential Sec protein translocation apparatus which comprises SecA, SecYEG and auxiliary proteins SecDF-YajC and YidC. Zn(2+) serves as cofactor.

Its subcellular location is the cell inner membrane. The protein localises to the cytoplasm. The catalysed reaction is ATP + H2O + cellular proteinSide 1 = ADP + phosphate + cellular proteinSide 2.. Functionally, part of the Sec protein translocase complex. Interacts with the SecYEG preprotein conducting channel. Has a central role in coupling the hydrolysis of ATP to the transfer of proteins into and across the cell membrane, serving both as a receptor for the preprotein-SecB complex and as an ATP-driven molecular motor driving the stepwise translocation of polypeptide chains across the membrane. The polypeptide is Protein translocase subunit SecA (Enterobacter sp. (strain 638)).